Consider the following 616-residue polypeptide: Chaperone protein HscA (616 aa).

This sequence belongs to the heat shock protein 70 family.

Its function is as follows. Chaperone involved in the maturation of iron-sulfur cluster-containing proteins. Has a low intrinsic ATPase activity which is markedly stimulated by HscB. Involved in the maturation of IscU. This Citrobacter koseri (strain ATCC BAA-895 / CDC 4225-83 / SGSC4696) protein is Chaperone protein HscA.